A 342-amino-acid chain; its full sequence is Trace amine-associated receptor 8 (342 aa).

Residues 1–31 are Extracellular-facing; that stretch reads MTSNFSQPVVQLCYEDVNGSCIETPYSPGSR. Residues Asn-4 and Asn-18 are each glycosylated (N-linked (GlcNAc...) asparagine). 2 disulfide bridges follow: Cys-21/Cys-185 and Cys-104/Cys-189. The chain crosses the membrane as a helical span at residues 32–52; the sequence is VILYTAFSFGSLLAVFGNLLV. At 53–67 the chain is on the cytoplasmic side; the sequence is MTSVLHFKQLHSPTN. The helical transmembrane segment at 68–88 threads the bilayer; the sequence is FLIASLACADFLVGVTVMLFS. Residues 89–111 are Extracellular-facing; sequence MVRTVESCWYFGAKFCTLHSCCD. A helical membrane pass occupies residues 112 to 132; sequence VAFCYSSVLHLCFICIDRYIV. The Cytoplasmic segment spans residues 133–146; sequence VTDPLVYATKFTVS. The helical transmembrane segment at 147 to 167 threads the bilayer; sequence VSGICISVSWILPLTYSGAVF. Residues 168–195 lie on the Extracellular side of the membrane; sequence YTGVNDDGLEELVSALNCVGGCQIIVSQ. A helical transmembrane segment spans residues 196–216; sequence GWVLIDFLLFFIPTLVMIILY. Over 217-258 the chain is Cytoplasmic; it reads SKIFLIAKQQAIKIETTSSKVESSSESYKIRVAKRERKAAKT. The helical transmembrane segment at 259-279 threads the bilayer; the sequence is LGVTVLAFVISWLPYTVDILI. Asp-280 is a topological domain (extracellular). Residues 281 to 301 traverse the membrane as a helical segment; that stretch reads AFMGFLTPAYIYEICCWSAYY. Residues 302 to 342 lie on the Cytoplasmic side of the membrane; that stretch reads NSAMNPLIYALFYPWFRKAIKLILSGDVLKASSSTISLFLE.

The protein belongs to the G-protein coupled receptor 1 family. As to expression, expressed in kidney and amygdala. Not expressed in other tissues or brain regions tested.

Its subcellular location is the cell membrane. Functionally, olfactory receptor specific for trace amines. Trace amine compounds are enriched in animal body fluids and act on trace amine-associated receptors (TAARs) to elicit both intraspecific and interspecific innate behaviors. Ligand-binding causes a conformation change that triggers signaling via G alpha proteins, possibly G(i)/G(o) G alpha proteins. The sequence is that of Trace amine-associated receptor 8 (TAAR8) from Homo sapiens (Human).